The chain runs to 174 residues: NADH-ubiquinone oxidoreductase chain 6 (174 aa).

The next 5 membrane-spanning stretches (helical) occupy residues 4–24, 25–45, 48–68, 82–102, and 143–163; these read LIIM…KHPL, SMGL…GIYV, FWFS…LFIY, FNLT…FFII, and LITL…VKIT.

This sequence belongs to the complex I subunit 6 family.

It is found in the mitochondrion membrane. It catalyses the reaction a ubiquinone + NADH + 5 H(+)(in) = a ubiquinol + NAD(+) + 4 H(+)(out). Core subunit of the mitochondrial membrane respiratory chain NADH dehydrogenase (Complex I) that is believed to belong to the minimal assembly required for catalysis. Complex I functions in the transfer of electrons from NADH to the respiratory chain. The immediate electron acceptor for the enzyme is believed to be ubiquinone. The protein is NADH-ubiquinone oxidoreductase chain 6 (ND6) of Anopheles quadrimaculatus (Common malaria mosquito).